The primary structure comprises 435 residues: Nucleoredoxin (435 aa).

Residue serine 2 is modified to N-acetylserine. The Thioredoxin domain maps to 167–321; that stretch reads PKPFREVIAG…VLELSDSNAA (155 aa).

The protein belongs to the nucleoredoxin family. As to quaternary structure, associates with the phosphatase 2A holoenzyme. Interacts with PPP2CA; the interaction is direct. Interacts with DVL1 (via PDZ domain); the interaction is direct and regulated by oxidative stress.

Its subcellular location is the cytoplasm. It localises to the cytosol. The protein localises to the nucleus. The enzyme catalyses [protein]-dithiol + NAD(+) = [protein]-disulfide + NADH + H(+). It carries out the reaction [protein]-dithiol + NADP(+) = [protein]-disulfide + NADPH + H(+). In terms of biological role, functions as a redox-dependent negative regulator of the Wnt signaling pathway, possibly by preventing ubiquitination of DVL3 by the BCR(KLHL12) complex. May also function as a transcriptional regulator act as a regulator of protein phosphatase 2A (PP2A). This chain is Nucleoredoxin (NXN), found in Homo sapiens (Human).